Consider the following 211-residue polypeptide: Claudin-7 (211 aa).

The Cytoplasmic portion of the chain corresponds to 1-7; the sequence is MANSGLQ. Residues 8 to 28 traverse the membrane as a helical segment; sequence LLGFSMALLGWVGLVACTAIP. Residues 29–81 are Extracellular-facing; sequence QWQMSSYAGDNIITAQAMYKGLWMDCVTQSTGMMSCKMYDSVLALSAALQATR. A helical membrane pass occupies residues 82–102; the sequence is ALMVVSLVLGFLAMFVATMGM. At 103–117 the chain is on the cytoplasmic side; the sequence is KCTRCGGDDKVKKAR. A helical transmembrane segment spans residues 118–138; the sequence is IAMGGGIIFIVAGLAALVACS. Residues 139-160 are Extracellular-facing; the sequence is WYGHQIVTDFYNPLIPTNIKYE. The chain crosses the membrane as a helical span at residues 161–181; the sequence is FGPAIFIGWAGSALVILGGAL. Residues 182–211 are Cytoplasmic-facing; that stretch reads LSCSCPGNESKAGYRVPRSYPKSNSSKEYV. Residues 210–211 form an interactions with TJP1, TJP2 and TJP3 region; the sequence is YV.

It belongs to the claudin family. As to quaternary structure, directly interacts with TJP1/ZO-1, TJP2/ZO-2 and TJP3/ZO-3. The phosphorylated form interacts with EPCAM. Does not interact with CD81. Post-translationally, phosphorylated. Expressed in kidney, lung and prostate. Isoform 1 seems to be predominant, except in some normal prostate samples, where isoform 2 is the major form. Down-regulated in breast cancers, including ductal carcinoma in situ (DCIS), lobular carcinoma in situ (LCIS) and invasive ductal carcinoma (IDC) (at protein level), as well as in several cancer cell lines. Loss of expression correlates with histological grade, occurring predominantly in high-grade lesions.

It localises to the cell membrane. The protein resides in the basolateral cell membrane. The protein localises to the cell junction. It is found in the tight junction. Its function is as follows. Plays a major role in tight junction-specific obliteration of the intercellular space. This chain is Claudin-7 (CLDN7), found in Homo sapiens (Human).